Reading from the N-terminus, the 378-residue chain is Flap endonuclease 1 (378 aa).

An N-domain region spans residues 1 to 102; it reads MGIHGLAKLI…GELAKRSERR (102 aa). Arg-19 bears the Symmetric dimethylarginine; by PRMT5 mark. A Mg(2+)-binding site is contributed by Asp-34. DNA contacts are provided by Arg-47 and Arg-69. N6-acetyllysine is present on Lys-78. Asp-84 contacts Mg(2+). Arg-98 and Arg-102 each carry symmetric dimethylarginine; by PRMT5. Positions 120-251 are I-domain; the sequence is EVEKFTKRLV…KRAVDLIQKH (132 aa). 4 residues coordinate Mg(2+): Glu-156, Glu-158, Asp-177, and Asp-179. DNA is bound at residue Glu-156. Ser-185 bears the Phosphoserine; by CDK2 mark. Arg-190 carries the post-translational modification Symmetric dimethylarginine; by PRMT5. Ser-195 is subject to Phosphoserine. Gly-229 and Asp-231 together coordinate DNA. Asp-231 contributes to the Mg(2+) binding site. Residues Ser-253, Ser-291, and Ser-333 each carry the phosphoserine modification. A disordered region spans residues 325 to 378; the sequence is RLSKSRQGSTQGRLDDFFKVTGSLSSAKRKEPEPKGPAKKKAKTGGAGKFRRGK. Residue Thr-334 is modified to Phosphothreonine. The interval 334–342 is interaction with PCNA; that stretch reads TQGRLDDFF. Residues Lys-352, Lys-373, and Lys-378 each carry the N6-acetyllysine modification. Over residues 361–378 the composition is skewed to basic residues; sequence PAKKKAKTGGAGKFRRGK.

This sequence belongs to the XPG/RAD2 endonuclease family. FEN1 subfamily. As to quaternary structure, interacts with PCNA. Three molecules of FEN1 bind to one PCNA trimer with each molecule binding to one PCNA monomer. PCNA stimulates the nuclease activity without altering cleavage specificity. The C-terminal domain binds EP300; can bind simultaneously to both PCNA and EP300. Interacts with DDX11; this interaction is direct and increases flap endonuclease activity of FEN1. Interacts with WDR4; regulating its endonuclease activity. Interacts with POLB. It depends on Mg(2+) as a cofactor. Acetylated by EP300. Acetylation inhibits both endonuclease and exonuclease activity. Acetylation also reduces DNA-binding activity but does not affect interaction with PCNA or EP300. In terms of processing, phosphorylation upon DNA damage induces relocalization to the nuclear plasma. Phosphorylation at Ser-185 by CDK2 occurs during late S-phase and results in dissociation from PCNA. Post-translationally, methylation at Arg-190 by PRMT5 impedes Ser-185 phosphorylation and increases interaction with PCNA.

It is found in the nucleus. It localises to the nucleolus. The protein resides in the nucleoplasm. The protein localises to the mitochondrion. Its function is as follows. Structure-specific nuclease with 5'-flap endonuclease and 5'-3' exonuclease activities involved in DNA replication and repair. During DNA replication, cleaves the 5'-overhanging flap structure that is generated by displacement synthesis when DNA polymerase encounters the 5'-end of a downstream Okazaki fragment. It enters the flap from the 5'-end and then tracks to cleave the flap base, leaving a nick for ligation. Also involved in the long patch base excision repair (LP-BER) pathway, by cleaving within the apurinic/apyrimidinic (AP) site-terminated flap. Acts as a genome stabilization factor that prevents flaps from equilibrating into structures that lead to duplications and deletions. Also possesses 5'-3' exonuclease activity on nicked or gapped double-stranded DNA, and exhibits RNase H activity. Also involved in replication and repair of rDNA and in repairing mitochondrial DNA. The polypeptide is Flap endonuclease 1 (Mus musculus (Mouse)).